A 180-amino-acid chain; its full sequence is Large ribosomal subunit protein uL5 (180 aa).

Belongs to the universal ribosomal protein uL5 family. Part of the 50S ribosomal subunit; part of the 5S rRNA/L5/L18/L25 subcomplex. Contacts the 5S rRNA and the P site tRNA. Forms a bridge to the 30S subunit in the 70S ribosome.

Its function is as follows. This is one of the proteins that bind and probably mediate the attachment of the 5S RNA into the large ribosomal subunit, where it forms part of the central protuberance. In the 70S ribosome it contacts protein S13 of the 30S subunit (bridge B1b), connecting the 2 subunits; this bridge is implicated in subunit movement. Contacts the P site tRNA; the 5S rRNA and some of its associated proteins might help stabilize positioning of ribosome-bound tRNAs. This chain is Large ribosomal subunit protein uL5, found in Acholeplasma laidlawii (strain PG-8A).